Reading from the N-terminus, the 310-residue chain is ADP-L-glycero-D-manno-heptose-6-epimerase (310 aa).

NADP(+) is bound by residues 10 to 11, 31 to 32, Lys38, Lys53, 75 to 79, and Asn92; these read LI, DN, and EGACS. Tyr140 functions as the Proton acceptor in the catalytic mechanism. Lys144 contacts NADP(+). Asn169 contributes to the substrate binding site. The NADP(+) site is built by Val170 and Lys178. The Proton acceptor role is filled by Lys178. Substrate is bound by residues Ser180, His187, 201–204, Arg209, and Tyr272; that span reads FAGS.

Belongs to the NAD(P)-dependent epimerase/dehydratase family. HldD subfamily. As to quaternary structure, homopentamer. It depends on NADP(+) as a cofactor.

It catalyses the reaction ADP-D-glycero-beta-D-manno-heptose = ADP-L-glycero-beta-D-manno-heptose. The protein operates within nucleotide-sugar biosynthesis; ADP-L-glycero-beta-D-manno-heptose biosynthesis; ADP-L-glycero-beta-D-manno-heptose from D-glycero-beta-D-manno-heptose 7-phosphate: step 4/4. In terms of biological role, catalyzes the interconversion between ADP-D-glycero-beta-D-manno-heptose and ADP-L-glycero-beta-D-manno-heptose via an epimerization at carbon 6 of the heptose. This Erwinia tasmaniensis (strain DSM 17950 / CFBP 7177 / CIP 109463 / NCPPB 4357 / Et1/99) protein is ADP-L-glycero-D-manno-heptose-6-epimerase.